The following is a 377-amino-acid chain: GTPase Obg (377 aa).

The 159-residue stretch at 1–159 folds into the Obg domain; that stretch reads MKFVDEATIE…RRLRMELKVL (159 aa). Residues 127-148 form a disordered region; sequence NIHFKSSTNRAPRQWTPGKEGE. The 177-residue stretch at 160 to 336 folds into the OBG-type G domain; that stretch reads ADVGLLGLPN…LIWALQDYLD (177 aa). Residues 166-173, 191-195, 213-216, 288-291, and 317-319 each bind GTP; these read GLPNAGKS, FTTLH, DIPG, NKLD, and SGL. Positions 173 and 193 each coordinate Mg(2+). The tract at residues 339–377 is disordered; that stretch reads KRKDQDAQDQADGTYVFEDPRFDASRGGAAPATPPGGDE.

The protein belongs to the TRAFAC class OBG-HflX-like GTPase superfamily. OBG GTPase family. In terms of assembly, monomer. Requires Mg(2+) as cofactor.

The protein localises to the cytoplasm. Its function is as follows. An essential GTPase which binds GTP, GDP and possibly (p)ppGpp with moderate affinity, with high nucleotide exchange rates and a fairly low GTP hydrolysis rate. Plays a role in control of the cell cycle, stress response, ribosome biogenesis and in those bacteria that undergo differentiation, in morphogenesis control. The chain is GTPase Obg from Bordetella bronchiseptica (strain ATCC BAA-588 / NCTC 13252 / RB50) (Alcaligenes bronchisepticus).